Reading from the N-terminus, the 352-residue chain is Protein RecA (352 aa).

67–74 (GPESSGKT) is an ATP binding site.

Belongs to the RecA family.

It is found in the cytoplasm. Functionally, can catalyze the hydrolysis of ATP in the presence of single-stranded DNA, the ATP-dependent uptake of single-stranded DNA by duplex DNA, and the ATP-dependent hybridization of homologous single-stranded DNAs. It interacts with LexA causing its activation and leading to its autocatalytic cleavage. In Klebsiella pneumoniae subsp. pneumoniae (strain ATCC 700721 / MGH 78578), this protein is Protein RecA.